Reading from the N-terminus, the 111-residue chain is Translation initiation factor 1A (111 aa).

An S1-like domain is found at 12–86 (GEMPLPSEDE…KKGEVVYRYL (75 aa)).

The protein belongs to the eIF-1A family.

Seems to be required for maximal rate of protein biosynthesis. Enhances ribosome dissociation into subunits and stabilizes the binding of the initiator Met-tRNA(I) to 40 S ribosomal subunits. The chain is Translation initiation factor 1A (eIF1A) from Aeropyrum pernix (strain ATCC 700893 / DSM 11879 / JCM 9820 / NBRC 100138 / K1).